The chain runs to 586 residues: Beta-fructofuranosidase, insoluble isoenzyme 3 (586 aa).

A signal peptide spans 1–26; the sequence is MATARARAALVFVALLQMAAVVVVRA. D61 is a catalytic residue. N-linked (GlcNAc...) asparagine glycans are attached at residues N154, N179, N341, N390, and N479.

The protein belongs to the glycosyl hydrolase 32 family.

The protein localises to the secreted. Its subcellular location is the extracellular space. It is found in the apoplast. The protein resides in the cell wall. The catalysed reaction is Hydrolysis of terminal non-reducing beta-D-fructofuranoside residues in beta-D-fructofuranosides.. The chain is Beta-fructofuranosidase, insoluble isoenzyme 3 (CIN3) from Oryza sativa subsp. indica (Rice).